The primary structure comprises 397 residues: DnaJ protein homolog 1 (397 aa).

Residues 1 to 52 form the J domain; the sequence is KNASPDDLKKAYRKAAIKNHPDKGGDPEKFKELAQAYDVLSDPEKREIYDQY. A CR-type zinc finger spans residues 114–198; that stretch reads GTSKKLSLSR…CKGEKVVQEK (85 aa). CXXCXGXG motif repeat units follow at residues 127-134, 143-150, 170-177, and 186-193; these read CSKCNGKG, CASCQGSG, CNDCKGTG, and CPLCKGEK. A disordered region spans residues 367 to 397; it reads MRRKQHQHAQEAYDEDDEGHGGGQRVQCAQQ. Cysteine methyl ester is present on C394. A lipid anchor (S-farnesyl cysteine) is attached at C394. A propeptide spans 395-397 (removed in mature form); that stretch reads AQQ.

It is found in the membrane. Plays a continuous role in plant development probably in the structural organization of compartments. In Allium porrum (Leek), this protein is DnaJ protein homolog 1 (DNAJ1).